Consider the following 290-residue polypeptide: D-tagatose-1,6-bisphosphate aldolase subunit KbaY (290 aa).

The active-site Proton donor is aspartate 82. Residues histidine 83 and histidine 180 each coordinate Zn(2+). Residue glycine 181 participates in dihydroxyacetone phosphate binding. Residue histidine 208 participates in Zn(2+) binding. Dihydroxyacetone phosphate-binding positions include 209-211 and 230-233; these read GAS and NVAT.

The protein belongs to the class II fructose-bisphosphate aldolase family. TagBP aldolase KbaY subfamily. In terms of assembly, homotetramer. Forms a complex with KbaZ. Zn(2+) is required as a cofactor.

The catalysed reaction is D-tagatofuranose 1,6-bisphosphate = D-glyceraldehyde 3-phosphate + dihydroxyacetone phosphate. Its pathway is carbohydrate metabolism; D-tagatose 6-phosphate degradation; D-glyceraldehyde 3-phosphate and glycerone phosphate from D-tagatose 6-phosphate: step 2/2. In terms of biological role, catalytic subunit of the tagatose-1,6-bisphosphate aldolase KbaYZ, which catalyzes the reversible aldol condensation of dihydroxyacetone phosphate (DHAP or glycerone-phosphate) with glyceraldehyde 3-phosphate (G3P) to produce tagatose 1,6-bisphosphate (TBP). Requires KbaZ subunit for full activity and stability. The sequence is that of D-tagatose-1,6-bisphosphate aldolase subunit KbaY from Salmonella arizonae (strain ATCC BAA-731 / CDC346-86 / RSK2980).